Here is a 413-residue protein sequence, read N- to C-terminus: Glutamyl-tRNA reductase (413 aa).

Residues 57-60, Ser113, 118-120, and Gln124 contribute to the substrate site; these read TCNR and DFE. The active-site Nucleophile is the Cys58. Residue 193-198 coordinates NADP(+); sequence GTGKIG.

It belongs to the glutamyl-tRNA reductase family. As to quaternary structure, homodimer.

The catalysed reaction is (S)-4-amino-5-oxopentanoate + tRNA(Glu) + NADP(+) = L-glutamyl-tRNA(Glu) + NADPH + H(+). Its pathway is porphyrin-containing compound metabolism; protoporphyrin-IX biosynthesis; 5-aminolevulinate from L-glutamyl-tRNA(Glu): step 1/2. Functionally, catalyzes the NADPH-dependent reduction of glutamyl-tRNA(Glu) to glutamate 1-semialdehyde (GSA). This chain is Glutamyl-tRNA reductase, found in Flavobacterium psychrophilum (strain ATCC 49511 / DSM 21280 / CIP 103535 / JIP02/86).